We begin with the raw amino-acid sequence, 58 residues long: Large ribosomal subunit protein eL37 (58 aa).

Cys20, Cys23, Cys35, and Cys38 together coordinate Zn(2+). Residues 20 to 38 (CRRCGEKSYHVKKERCSSC) form a C4-type zinc finger. Positions 39–58 (GFGDSASRRGYAWQSKSGDN) are disordered.

Belongs to the eukaryotic ribosomal protein eL37 family. It depends on Zn(2+) as a cofactor.

Its function is as follows. Binds to the 23S rRNA. The protein is Large ribosomal subunit protein eL37 of Halorubrum lacusprofundi (strain ATCC 49239 / DSM 5036 / JCM 8891 / ACAM 34).